The primary structure comprises 186 residues: CASP-like protein 4C2 (186 aa).

The Cytoplasmic segment spans residues 1–31 (MRSPQPHRSGGDTQQHFQSTVSVQKLKRFNS). The helical transmembrane segment at 32–52 (LILVFRFAAFCFSLASAVFML) threads the bilayer. Topologically, residues 53–71 (TNSRGSDSLHWYNFDAFRY) are extracellular. A helical membrane pass occupies residues 72-92 (VFAANAIVAIYSLFEMAASVW). Over 93–103 (EISRNATLFPE) the chain is Cytoplasmic. Residues 104-124 (ICQVWFDFGHDQVFAYLLLSA) form a helical membrane-spanning segment. The Extracellular segment spans residues 125–150 (NTAGTELARTLKDTCTDNKAFCVQSD). A helical transmembrane segment spans residues 151 to 171 (IAIVLGFAGFLFLGISSLFSG). Topologically, residues 172–186 (FRVVCFIINGSRFYV) are cytoplasmic.

Belongs to the Casparian strip membrane proteins (CASP) family. Homodimer and heterodimers.

It localises to the cell membrane. In Populus trichocarpa (Western balsam poplar), this protein is CASP-like protein 4C2.